Reading from the N-terminus, the 353-residue chain is Probable tRNA pseudouridine synthase B (353 aa).

D45 acts as the Nucleophile in catalysis. The PUA domain maps to 211 to 287 (YPKIVAKKSA…DHIFVEAKHG (77 aa)). The disordered stretch occupies residues 292–353 (VRDREKDVQR…TGVHRRPGSH (62 aa)). A compositionally biased stretch (basic and acidic residues) spans 309 to 328 (NIRDAAHGPDSRTGRGRKET). Basic residues predominate over residues 336–353 (RVRKLQNKTGVHRRPGSH).

It belongs to the pseudouridine synthase TruB family. Type 2 subfamily.

The catalysed reaction is uridine(55) in tRNA = pseudouridine(55) in tRNA. Could be responsible for synthesis of pseudouridine from uracil-55 in the psi GC loop of transfer RNAs. This is Probable tRNA pseudouridine synthase B from Thermoplasma volcanium (strain ATCC 51530 / DSM 4299 / JCM 9571 / NBRC 15438 / GSS1).